A 330-amino-acid polypeptide reads, in one-letter code: Small ribosomal subunit protein uS15m (330 aa).

It belongs to the universal ribosomal protein uS15 family. As to quaternary structure, component of the mitochondrial ribosome small subunit (28S) which comprises a 12S rRNA and about 30 distinct proteins.

The protein resides in the mitochondrion. The polypeptide is Small ribosomal subunit protein uS15m (mrps-15) (Caenorhabditis elegans).